Reading from the N-terminus, the 263-residue chain is Tryptophan synthase alpha chain (263 aa).

Active-site proton acceptor residues include glutamate 47 and aspartate 58.

Belongs to the TrpA family. In terms of assembly, tetramer of two alpha and two beta chains.

The protein resides in the plastid. Its subcellular location is the chloroplast. It carries out the reaction (1S,2R)-1-C-(indol-3-yl)glycerol 3-phosphate + L-serine = D-glyceraldehyde 3-phosphate + L-tryptophan + H2O. The protein operates within amino-acid biosynthesis; L-tryptophan biosynthesis; L-tryptophan from chorismate: step 5/5. Functionally, the alpha subunit is responsible for the aldol cleavage of indoleglycerol phosphate to indole and glyceraldehyde 3-phosphate. This is Tryptophan synthase alpha chain from Antithamnion sp. (Red alga).